The chain runs to 162 residues: Caveolin-2 (162 aa).

The Cytoplasmic segment spans residues 1–86; that stretch reads MGLESEKADV…FEISKYVLYK (86 aa). Residue Tyr-19 is modified to Phosphotyrosine. A phosphoserine mark is found at Ser-20, Ser-23, and Ser-36. The helical intramembrane region spans 87–107; that stretch reads FLTFFLAIPLAFAAGILFAIL. Residues 108–162 are Cytoplasmic-facing; it reads SCLHIWIIMPFVKTCLMVLPSVQTIWKSVTDVVIAPLCTSVGRSFSSVSLQLSQD.

It belongs to the caveolin family. In terms of assembly, monomer or homodimer. Interacts with CAV1; the interaction forms a stable heterooligomeric complex that is required for targeting to lipid rafts and for caveolae formation. Tyrosine phosphorylated forms do not form heterooligomers with the Tyr-19-phosphorylated form existing as a monomer or dimer. Interacts (tyrosine phosphorylated form) with the SH2 domain-containing proteins, RASA1, NCK1 and SRC. Interacts (tyrosine phosphorylated form) with INSR. Interacts (Tyr-19 phosphorylated form) with MAPK1 (phosphorylated form); the interaction, promoted by insulin, leads to nuclear location and MAPK1 activation. Interacts with STAT3; the interaction is increased on insulin-induced tyrosine phosphorylation leading to STAT activation. In terms of processing, phosphorylated on serine and tyrosine residues. CAV1 promotes phosphorylation on Ser-23 which then targets the complex to the plasma membrane, lipid rafts and caveolae. Phosphorylation on Ser-36 appears to modulate mitosis in endothelial cells. Phosphorylation on Tyr-19 is required for insulin-induced phosphorylation of MAPK1 and DNA binding of STAT3. Tyrosine phosphorylation is induced by both EGF and insulin.

It localises to the nucleus. The protein resides in the golgi apparatus membrane. The protein localises to the cell membrane. Its subcellular location is the membrane. It is found in the caveola. Its function is as follows. May act as a scaffolding protein within caveolar membranes. Interacts directly with G-protein alpha subunits and can functionally regulate their activity. Acts as an accessory protein in conjunction with CAV1 in targeting to lipid rafts and driving caveolae formation. The Ser-36 phosphorylated form has a role in modulating mitosis in endothelial cells. Positive regulator of cellular mitogenesis of the MAPK signaling pathway. Required for the insulin-stimulated nuclear translocation and activation of MAPK1 and STAT3, and the subsequent regulation of cell cycle progression. The chain is Caveolin-2 (CAV2) from Echinops telfairi (Lesser hedgehog tenrec).